Consider the following 596-residue polypeptide: Arginine--tRNA ligase (596 aa).

A 'HIGH' region motif is present at residues 128–138 (ANPTSSLHVGH).

The protein belongs to the class-I aminoacyl-tRNA synthetase family. Monomer.

It is found in the cytoplasm. It carries out the reaction tRNA(Arg) + L-arginine + ATP = L-arginyl-tRNA(Arg) + AMP + diphosphate. The protein is Arginine--tRNA ligase of Acinetobacter baylyi (strain ATCC 33305 / BD413 / ADP1).